The primary structure comprises 220 residues: Zinc-finger homeodomain protein 2 (220 aa).

Acidic residues predominate over residues 1-11 (MNFEDQEEDME). Positions 1 to 40 (MNFEDQEEDMEMSGVNPPCGYDSLSGEGATSSGGGGVGRS) are disordered. Gly residues predominate over residues 31-40 (SSGGGGVGRS). The segment at 49–98 (YRECLKNHAVNIGGHAVDGCCEFMPSGEDGTLDALKCAACGCHRNFHRKE) adopts a ZF-HD dimerization-type zinc-finger fold. Residues 100–160 (ESIGGRAHRV…SSSGGTTKRF (61 aa)) form a disordered region. The homeobox; atypical DNA-binding region spans 157-220 (TKRFRTKFTA…NNKNSLGKKP (64 aa)).

As to quaternary structure, homo or heterodimer. Interacts with ZHD1, ZHD3, ZHD4, ZHD5, ZHD6, ZHD7, ZHD8, ZHD9, ZHD10 and ZHD11. As to expression, mostly expressed in flowers and, to a lower extent, in inflorescence, stems and leaves.

It is found in the nucleus. Essential protein. Putative transcription factor. The chain is Zinc-finger homeodomain protein 2 (ZHD1) from Arabidopsis thaliana (Mouse-ear cress).